The sequence spans 306 residues: Pantothenate kinase (306 aa).

91 to 98 (GSVAVGKS) lines the ATP pocket.

It belongs to the prokaryotic pantothenate kinase family.

It localises to the cytoplasm. The enzyme catalyses (R)-pantothenate + ATP = (R)-4'-phosphopantothenate + ADP + H(+). It functions in the pathway cofactor biosynthesis; coenzyme A biosynthesis; CoA from (R)-pantothenate: step 1/5. The polypeptide is Pantothenate kinase (Streptococcus suis (strain 98HAH33)).